Reading from the N-terminus, the 196-residue chain is uncharacterized protein (196 aa).

Residues 122 to 135 (SEIEKKQEPIERKT) show a composition bias toward basic and acidic residues. The interval 122–150 (SEIEKKQEPIERKTSTTTNTESNQEKPLR) is disordered.

This is an uncharacterized protein from Leptospira interrogans.